The sequence spans 675 residues: MTPSQVTFEIRGTLLPGEVFAICGSCDALGNWNPQNAVALINENETGDSVLWKAVIALNRGVSVKYRYFRGCFLEPKTIGGPCQVIVHKWETHLQPRSITPLESEIIIDDGQFGIHNGVETLDSGWLTCQTEIRLRLHFSEKPPVSISKKKFKKSRFRVKLTLEGLEEDEDDDDDKVSPTVLHKMSNSLEISLISDNEFKCRHSQPECGYGLQPDRWTEYSIQTMEPDNLELIFDFFEEDLSEHVVQGDVLPGHVGTACLLSSTIAESGRSAGILTLPIMSRNSRKTIGKVRVDFIIIKPLPGYSCSMQSSFSKYWKPRIPLDVGHRGAGNSTTTAKLAKVQENTIASLRNAASHGAAFVEFDVHLSKDFVPVVYHDLTCCLTMKRKYEADPVELFEIPVKELTFDQLQLLKLSHVTALKTKDRKQSLYEEENFFSENQPFPSLKMVLESLPENVGFNIEIKWICQHRDGVWDGNLSTYFDMNVFLDIILKTVLENSGKRRIVFSSFDADICTMVRQKQNKYPILFLTQGKSDIYPELMDLRSRTTPIAMSFAQFENILGINAHTEDLLRNPSYVQEAKAKGLVIFCWGDDTNDPENRRKLKEFGVNGLIYDRIYDWMPEQPNIFQVEQLERLKQELPELKNCLCPTVSHFIPSSFCVEPDIHVDANGIDSVENA.

A CBM20 domain is found at 1–115 (MTPSQVTFEI…IIIDDGQFGI (115 aa)). Residues R70 and 88–89 (HK) contribute to the substrate site. Phosphoserine occurs at positions 178 and 427. Positions 321-621 (PLDVGHRGAG…DRIYDWMPEQ (301 aa)) constitute a GP-PDE domain. The residue at position 611 (Y611) is a Phosphotyrosine.

This sequence belongs to the glycerophosphoryl diester phosphodiesterase family. Widely expressed with highest levels in skeletal muscle and heart.

Its subcellular location is the cytoplasm. The protein localises to the cytosol. It carries out the reaction sn-glycerol 3-phosphocholine + H2O = sn-glycerol 3-phosphate + choline + H(+). Functionally, may be involved in the negative regulation of skeletal muscle differentiation, independently of its glycerophosphocholine phosphodiesterase activity. This chain is Glycerophosphocholine phosphodiesterase GPCPD1 (Gpcpd1), found in Mus musculus (Mouse).